The following is an 86-amino-acid chain: Anti-adapter protein IraP (86 aa).

Residues 1-36 (MKNLISELLLRLAQKEEESKELVAQVEALEIIVTAM) adopt a coiled-coil conformation.

It belongs to the IraP family. In terms of assembly, interacts with RssB.

It is found in the cytoplasm. Inhibits RpoS proteolysis by regulating RssB activity, thereby increasing the stability of the sigma stress factor RpoS especially during phosphate starvation, but also in stationary phase and during nitrogen starvation. Its effect on RpoS stability is due to its interaction with RssB, which probably blocks the interaction of RssB with RpoS, and the consequent delivery of the RssB-RpoS complex to the ClpXP protein degradation pathway. The sequence is that of Anti-adapter protein IraP from Citrobacter koseri (strain ATCC BAA-895 / CDC 4225-83 / SGSC4696).